Reading from the N-terminus, the 311-residue chain is Probable dihydroorotate dehydrogenase A (fumarate) (311 aa).

FMN contacts are provided by residues Ser20 and 44–45 (KT). Residues Lys44, 68 to 72 (NSMGL), and Asn127 each bind substrate. Asn127 provides a ligand contact to FMN. The active-site Nucleophile is Cys130. Residues Lys164 and Ile192 each coordinate FMN. Residue 193–194 (NS) participates in substrate binding. FMN contacts are provided by residues Gly221, 249 to 250 (GG), and 271 to 272 (GT).

The protein belongs to the dihydroorotate dehydrogenase family. Type 1 subfamily. In terms of assembly, homodimer. FMN serves as cofactor.

It is found in the cytoplasm. The catalysed reaction is (S)-dihydroorotate + fumarate = orotate + succinate. It functions in the pathway pyrimidine metabolism; UMP biosynthesis via de novo pathway. Its function is as follows. Catalyzes the conversion of dihydroorotate to orotate with fumarate as the electron acceptor. The sequence is that of Probable dihydroorotate dehydrogenase A (fumarate) (pyrDA) from Enterococcus faecalis (strain ATCC 700802 / V583).